Consider the following 357-residue polypeptide: Cinnamyl alcohol dehydrogenase 7 (357 aa).

A Zn(2+)-binding site is contributed by cysteine 46. Threonine 48 serves as a coordination point for NADP(+). Zn(2+) is bound by residues histidine 68, glutamate 69, cysteine 99, cysteine 102, cysteine 105, cysteine 113, and cysteine 162. Residues threonine 166, 187-192 (GLGGLG), 210-215 (STSERK), threonine 250, glycine 274, and 297-299 (SMV) each bind NADP(+).

Belongs to the zinc-containing alcohol dehydrogenase family. As to quaternary structure, homodimer. The cofactor is Zn(2+). In terms of tissue distribution, expressed in the differentiation and elongation zones of primary and lateral roots. Expressed in the hypocotyl, cotyledon and leaf veins, hydathodes and trichomes. In stems, expressed in the vascular cambium region. Expressed in the style, anthers, stamen filaments, vascular tissues of sepals and stigmatic regions in flowers, and abscission, style and stigmatic regions of siliques and seed testa.

It catalyses the reaction (E)-cinnamyl alcohol + NADP(+) = (E)-cinnamaldehyde + NADPH + H(+). Its pathway is aromatic compound metabolism; phenylpropanoid biosynthesis. In terms of biological role, involved in lignin biosynthesis. Catalyzes the final step specific for the production of lignin monomers. Catalyzes the NADPH-dependent reduction of coniferaldehyde, 5-hydroxyconiferaldehyde, sinapaldehyde, 4-coumaraldehyde and caffeyl aldehyde to their respective alcohols. This is Cinnamyl alcohol dehydrogenase 7 (CAD7) from Arabidopsis thaliana (Mouse-ear cress).